Reading from the N-terminus, the 353-residue chain is tRNA N6-adenosine threonylcarbamoyltransferase (353 aa).

Residues H109 and H113 each coordinate Fe cation. Substrate is bound by residues 136–140, D169, G182, D186, and N284; that span reads TVSGG. Residue D312 participates in Fe cation binding.

Belongs to the KAE1 / TsaD family. Requires Fe(2+) as cofactor.

It is found in the cytoplasm. The enzyme catalyses L-threonylcarbamoyladenylate + adenosine(37) in tRNA = N(6)-L-threonylcarbamoyladenosine(37) in tRNA + AMP + H(+). In terms of biological role, required for the formation of a threonylcarbamoyl group on adenosine at position 37 (t(6)A37) in tRNAs that read codons beginning with adenine. Is involved in the transfer of the threonylcarbamoyl moiety of threonylcarbamoyl-AMP (TC-AMP) to the N6 group of A37, together with TsaE and TsaB. TsaD likely plays a direct catalytic role in this reaction. This is tRNA N6-adenosine threonylcarbamoyltransferase from Chlorobium phaeobacteroides (strain DSM 266 / SMG 266 / 2430).